The primary structure comprises 365 residues: Eukaryotic translation initiation factor 3 subunit H (365 aa).

The MPN domain occupies 11–160 (VKVEALVVMK…LRAFRLSPKF (150 aa)).

Belongs to the eIF-3 subunit H family. As to quaternary structure, component of the eukaryotic translation initiation factor 3 (eIF-3) complex.

The protein localises to the cytoplasm. In terms of biological role, component of the eukaryotic translation initiation factor 3 (eIF-3) complex, which is involved in protein synthesis of a specialized repertoire of mRNAs and, together with other initiation factors, stimulates binding of mRNA and methionyl-tRNAi to the 40S ribosome. The eIF-3 complex specifically targets and initiates translation of a subset of mRNAs involved in cell proliferation. The sequence is that of Eukaryotic translation initiation factor 3 subunit H from Aspergillus niger (strain ATCC MYA-4892 / CBS 513.88 / FGSC A1513).